The following is a 542-amino-acid chain: Gamma-terpinene synthase 1 (542 aa).

Mn(2+) contacts are provided by Asp295 and Asp299. A DDXXD motif motif is present at residues 295–299 (DDVYD). 2 homodimerization regions span residues 301 to 307 (YDTLDEL) and 373 to 410 (EAKW…FTLP). The Mn(2+) site is built by Asp439 and Glu447.

It belongs to the terpene synthase family. Homodimer. Mn(2+) serves as cofactor. The cofactor is Mg(2+). Mostly expressed in flowers and, to a lower extent, in leaves, especially in glandular trichomes.

It carries out the reaction (2E)-geranyl diphosphate = gamma-terpinene + diphosphate. The catalysed reaction is (2E)-geranyl diphosphate = alpha-terpinene + diphosphate. It functions in the pathway secondary metabolite biosynthesis; terpenoid biosynthesis. Its function is as follows. Involved in the biosynthesis of phenolic monoterpenes natural products thymol and carvacrol which have a broad range of biological activities acting as antimicrobial compounds, insecticides, antioxidants and pharmaceutical agents. Monoterpene synthase which catalyzes the conversion of geranyl diphosphate (GPP) to gamma-terpinene and the minor products alpha-thujene, alpha-terpinene, myrcene, sabinene, (+)-R-limonene, alpha-pinene and alpha-phellandrene. The chain is Gamma-terpinene synthase 1 from Thymus vulgaris (Thyme).